A 1122-amino-acid polypeptide reads, in one-letter code: Adhesin P1 (1122 aa).

A signal peptide spans 1–30; the sequence is MKKLIFKLSVGITPLALIGLGSFGLAVSGA. 3 disordered regions span residues 183 to 209, 244 to 273, and 544 to 563; these read AGDT…GGAV, DYNS…GGRT, and QNSG…NGNE. The span at 195 to 208 shows a compositional bias: gly residues; that stretch reads AGGGSGSSAAGGGA. Residues 259-273 show a composition bias toward polar residues; that stretch reads LDSSESSESINGGRT. The helical transmembrane segment at 997–1021 threads the bilayer; sequence VLPVAISIPIIIIALALALGLGIGI. Positions 1066–1122 are disordered; sequence KTPQMLQANKKDGASSPSKPSAPAAKKPTGPTKPSAPGAKPTAPAKPKAPAPTKKIE. Residues 1079–1122 show a composition bias toward low complexity; sequence ASSPSKPSAPAAKKPTGPTKPSAPGAKPTAPAKPKAPAPTKKIE.

It belongs to the adhesin P1 family.

Its subcellular location is the cell membrane. Functionally, could be involved in cytadherence. In Mycoplasmoides gallisepticum (Mycoplasma gallisepticum), this protein is Adhesin P1 (gapA).